Here is a 40-residue protein sequence, read N- to C-terminus: uncharacterized protein (40 aa).

Residues 1–17 (MAVAALAMYGGTCGACA) form the signal peptide.

This is an uncharacterized protein from Archaeoglobus fulgidus (strain ATCC 49558 / DSM 4304 / JCM 9628 / NBRC 100126 / VC-16).